Consider the following 138-residue polypeptide: ATP synthase epsilon chain (138 aa).

This sequence belongs to the ATPase epsilon chain family. In terms of assembly, F-type ATPases have 2 components, CF(1) - the catalytic core - and CF(0) - the membrane proton channel. CF(1) has five subunits: alpha(3), beta(3), gamma(1), delta(1), epsilon(1). CF(0) has three main subunits: a, b and c.

The protein localises to the cell membrane. Functionally, produces ATP from ADP in the presence of a proton gradient across the membrane. The protein is ATP synthase epsilon chain of Streptococcus uberis (strain ATCC BAA-854 / 0140J).